Reading from the N-terminus, the 62-residue chain is MDILKKSLFLVLFLGLVSFSICEEEKRDTEEEENDDEIEEESEEKKREAPERPPGFTPFRIY.

The N-terminal stretch at 1 to 22 (MDILKKSLFLVLFLGLVSFSIC) is a signal peptide. Positions 24–62 (EEKRDTEEEENDDEIEEESEEKKREAPERPPGFTPFRIY) are disordered. Positions 30 to 42 (EEEENDDEIEEES) are enriched in acidic residues. A 4-hydroxyproline; partial modification is found at proline 54. A Sulfotyrosine modification is found at tyrosine 62.

It belongs to the frog skin active peptide (FSAP) family. Bradykinin-related peptide subfamily. In terms of tissue distribution, expressed by the skin glands.

The protein resides in the secreted. Inhibits ACE with a Ki of 1.6 uM, and targets B2 bradykinin receptor (BDKRB2). Provokes contraction of smooth muscle preparation (ileum). In vivo, induces an early hyperalgesic effects in living rats after intraplantar injection. This is Kininogen-1 from Phyllomedusa sauvagei (Sauvage's leaf frog).